Reading from the N-terminus, the 274-residue chain is tRNA-cytidine(32) 2-sulfurtransferase (274 aa).

The short motif at 40–45 is the PP-loop motif element; that stretch reads SGGKDS. Positions 115, 118, and 206 each coordinate [4Fe-4S] cluster.

This sequence belongs to the TtcA family. In terms of assembly, homodimer. It depends on Mg(2+) as a cofactor. [4Fe-4S] cluster is required as a cofactor.

Its subcellular location is the cytoplasm. It catalyses the reaction cytidine(32) in tRNA + S-sulfanyl-L-cysteinyl-[cysteine desulfurase] + AH2 + ATP = 2-thiocytidine(32) in tRNA + L-cysteinyl-[cysteine desulfurase] + A + AMP + diphosphate + H(+). It participates in tRNA modification. Its function is as follows. Catalyzes the ATP-dependent 2-thiolation of cytidine in position 32 of tRNA, to form 2-thiocytidine (s(2)C32). The sulfur atoms are provided by the cysteine/cysteine desulfurase (IscS) system. The polypeptide is tRNA-cytidine(32) 2-sulfurtransferase (Pseudomonas fluorescens (strain Pf0-1)).